We begin with the raw amino-acid sequence, 167 residues long: MMAKVESQTGDLNEKLIAVNRVAKVVKGGRIFSFTALTVVGDGNGRVGFGYGKAREVPAAIQKAMEKARRNIRDVQLKGNTLQHPIKGRHSGSKVYMQPASEGTGIIAGGAMRAVLEVVGVQNVLSKAYGSTNPINVVRATLDALENMNSPEQIAAKRGLSVNELLG.

One can recognise an S5 DRBM domain in the interval 12-75 (LNEKLIAVNR…EKARRNIRDV (64 aa)).

Belongs to the universal ribosomal protein uS5 family. In terms of assembly, part of the 30S ribosomal subunit. Contacts proteins S4 and S8.

In terms of biological role, with S4 and S12 plays an important role in translational accuracy. Located at the back of the 30S subunit body where it stabilizes the conformation of the head with respect to the body. The sequence is that of Small ribosomal subunit protein uS5 from Psychromonas ingrahamii (strain DSM 17664 / CCUG 51855 / 37).